Here is a 638-residue protein sequence, read N- to C-terminus: Paramyosin (638 aa).

Residues Phe1 to Asp638 are a coiled coil.

Belongs to the paramyosin family. Homodimer.

The protein localises to the cytoplasm. The protein resides in the myofibril. Paramyosin is a major structural component of many thick filaments isolated from invertebrate muscles. The chain is Paramyosin from Opisthorchis felineus.